A 192-amino-acid chain; its full sequence is Fe/S biogenesis protein NfuA (192 aa).

Cysteine 149 and cysteine 152 together coordinate [4Fe-4S] cluster.

Belongs to the NfuA family. As to quaternary structure, homodimer. Requires [4Fe-4S] cluster as cofactor.

Involved in iron-sulfur cluster biogenesis. Binds a 4Fe-4S cluster, can transfer this cluster to apoproteins, and thereby intervenes in the maturation of Fe/S proteins. Could also act as a scaffold/chaperone for damaged Fe/S proteins. This chain is Fe/S biogenesis protein NfuA, found in Idiomarina loihiensis (strain ATCC BAA-735 / DSM 15497 / L2-TR).